Reading from the N-terminus, the 402-residue chain is E3 ubiquitin-protein ligase makorin-2 (402 aa).

3 C3H1-type zinc fingers span residues 2–29, 31–58, and 141–168; these read TTKQVTCRYFLHGVCREGNHCQFSHDPS, SKPSTICKFYQRGTCAYGERCRYDHVKL, and QDLPRLCPYAAVGHCYYEENCIYLHGDK. Residues 169-198 form a makorin-type Cys-His region; it reads CEVCGLQVLDPHNPEQRSMHEKMCLLAFEA. The RING-type zinc finger occupies 214–268; the sequence is CSICMEVVVQKMNPSDRRFGILSSCCHVFCLACIRKWRCTRNFSNKIIKSCPECR. Residues 297-326 form a C3H1-type 4 zinc finger; sequence GVGKKPCKYFDQGRGSCPFGGKCLYLHALP.

It localises to the cytoplasm. The protein resides in the nucleus. It carries out the reaction S-ubiquitinyl-[E2 ubiquitin-conjugating enzyme]-L-cysteine + [acceptor protein]-L-lysine = [E2 ubiquitin-conjugating enzyme]-L-cysteine + N(6)-ubiquitinyl-[acceptor protein]-L-lysine.. It participates in protein modification; protein ubiquitination. Its function is as follows. E3 ubiquitin ligase catalyzing the covalent attachment of ubiquitin moieties onto substrate proteins. Inhibits neurogenesis and axis formation during embryonic development by modulating the phosphatidylinositol 3-kinase (PI3K) pathway. Acts downstream of PI3K and akt1 to up-regulate gsk3b mRNA expression. This chain is E3 ubiquitin-protein ligase makorin-2, found in Takifugu rubripes (Japanese pufferfish).